A 547-amino-acid chain; its full sequence is MDTRRLILVLIFTFSSFMLWENWQKYNQPKPADAVAAAPVSGAAPTPSAALQAKAAPGTPPVATPVSTAETFSITTDLLKATISAQGGDLVSLELLNYKEHDDIQKNFDLFDAKHQYLAQAGLIGEGLPTHRTTFKHVGGATKLADGTDELKVRLESADQNGIKVAKILTFKRGSYLIDIAWEVANGSDKAIAPHAYYQLQRDDLAPAGETKMVSTFTGPAVFTDADKYQKVTFEHIADNKAKFTKTADNGWLAMVQHYFVSAWVPKDKTQREFYMRKVEGSNVFQAGVIVPVAEIAPGAKGEASVSLYAGPQMQSALKQVAPGLDLVVDYGWLTVVAAPIFWALEAIHKLVGNWGWAIVVLTIMIKAVFFPLSAASYKSMAKMKMLTPRLAQLKERFGDDKQRLNQEMMKLYQTEKVNPLGGCLPILVQIPVFIALYWVLLGAVEMRGAPWILWIKDLASADPYYILPVIMMVSMFVQTKLNPTPPDPIQAKVMMMMPLIFGFMFFWFPAGLVLYWVVNNVLSIAQQWQITRLIDAGGKAANDAKA.

6 helical membrane-spanning segments follow: residues 6–26 (LILVLIFTFSSFMLWENWQKY), 328–348 (VVDYGWLTVVAAPIFWALEAI), 351–371 (LVGNWGWAIVVLTIMIKAVFF), 425–445 (LPILVQIPVFIALYWVLLGAV), 459–479 (LASADPYYILPVIMMVSMFVQ), and 499–519 (PLIFGFMFFWFPAGLVLYWVV).

The protein belongs to the OXA1/ALB3/YidC family. Type 1 subfamily. As to quaternary structure, interacts with the Sec translocase complex via SecD. Specifically interacts with transmembrane segments of nascent integral membrane proteins during membrane integration.

The protein resides in the cell inner membrane. Its function is as follows. Required for the insertion and/or proper folding and/or complex formation of integral membrane proteins into the membrane. Involved in integration of membrane proteins that insert both dependently and independently of the Sec translocase complex, as well as at least some lipoproteins. Aids folding of multispanning membrane proteins. This is Membrane protein insertase YidC from Dechloromonas aromatica (strain RCB).